The primary structure comprises 274 residues: Subtilisin DY (274 aa).

Gln-2 is a binding site for Ca(2+). A Peptidase S8 domain is found at 5–273; that stretch reads PYGIPLIKAD…KGLINVEAAA (269 aa). Asp-32 functions as the Charge relay system in the catalytic mechanism. Asp-41 lines the Ca(2+) pocket. The active-site Charge relay system is His-63. Residues Leu-74, Asn-76, Val-80, Ala-168, Tyr-170, and Val-173 each coordinate Ca(2+). Ser-220 (charge relay system) is an active-site residue.

This sequence belongs to the peptidase S8 family. Requires Ca(2+) as cofactor.

The protein resides in the secreted. It catalyses the reaction Hydrolysis of proteins with broad specificity for peptide bonds, and a preference for a large uncharged residue in P1. Hydrolyzes peptide amides.. Its function is as follows. Subtilisin is an extracellular alkaline serine protease, it catalyzes the hydrolysis of proteins and peptide amides. The protein is Subtilisin DY (apr) of Bacillus licheniformis.